A 617-amino-acid polypeptide reads, in one-letter code: Alkaline/neutral invertase E, chloroplastic (617 aa).

A chloroplast-targeting transit peptide spans 1 to 45 (MAASETVLRVPLGSVSQSCYLASFFVNSTPNLSFKPVSRNRKTVR). Phosphoserine is present on Ser87.

Belongs to the glycosyl hydrolase 100 family. Expressed in roots, leaves and flowers.

It is found in the plastid. It localises to the chloroplast. It carries out the reaction Hydrolysis of terminal non-reducing beta-D-fructofuranoside residues in beta-D-fructofuranosides.. Functionally, chloroplastic invertase that cleaves sucrose into glucose and fructose and is associated with the development of the photosynthetic apparatus and the assimilation of nitrogen in seedlings to control the sucrose to hexose ratio. Participates in the carbon flux between the cytosol and plastids in leaves. This chain is Alkaline/neutral invertase E, chloroplastic, found in Arabidopsis thaliana (Mouse-ear cress).